The chain runs to 326 residues: MATH domain and coiled-coil domain-containing protein At3g58370 (326 aa).

An MATH domain is found at 7–133; that stretch reads DNKFTWVIKN…NGEVKIVVEI (127 aa). Residues 259-312 are a coiled coil; that stretch reads LRLDWLEKKLAEVKAKKKKVETGKARLQRAEEELQKLNQKCLELKAFLEKENAD.

The sequence is that of MATH domain and coiled-coil domain-containing protein At3g58370 from Arabidopsis thaliana (Mouse-ear cress).